Here is a 98-residue protein sequence, read N- to C-terminus: MDLIIKEKRDNPILKRKEIKYVLKFDSSRTPSREEIKELIAKHEGVDKELVIVDNNKQLTGKHEIEGYTKIYADKPSAMLYEPDYELIRNGLKQKEAK.

The protein belongs to the eukaryotic ribosomal protein eS24 family.

This is Small ribosomal subunit protein eS24 (rps2e) from Thermoplasma acidophilum (strain ATCC 25905 / DSM 1728 / JCM 9062 / NBRC 15155 / AMRC-C165).